The following is a 287-amino-acid chain: Polyamine aminopropyltransferase (287 aa).

Residues 5 to 238 (EIWYETLHAN…GIMTFAWASN (234 aa)) enclose the PABS domain. Glutamine 33 is an S-methyl-5'-thioadenosine binding site. Positions 64 and 88 each coordinate spermidine. Residues glutamate 108 and 140–141 (DG) each bind S-methyl-5'-thioadenosine. The active-site Proton acceptor is aspartate 158. A spermidine-binding site is contributed by 158-161 (DCTD). Proline 165 serves as a coordination point for S-methyl-5'-thioadenosine.

This sequence belongs to the spermidine/spermine synthase family. As to quaternary structure, homodimer or homotetramer.

It is found in the cytoplasm. It carries out the reaction S-adenosyl 3-(methylsulfanyl)propylamine + putrescine = S-methyl-5'-thioadenosine + spermidine + H(+). It participates in amine and polyamine biosynthesis; spermidine biosynthesis; spermidine from putrescine: step 1/1. Functionally, catalyzes the irreversible transfer of a propylamine group from the amino donor S-adenosylmethioninamine (decarboxy-AdoMet) to putrescine (1,4-diaminobutane) to yield spermidine. This chain is Polyamine aminopropyltransferase, found in Pectobacterium carotovorum subsp. carotovorum (strain PC1).